We begin with the raw amino-acid sequence, 428 residues long: UDP-N-acetylglucosamine 1-carboxyvinyltransferase 2 (428 aa).

22–23 (KN) serves as a coordination point for phosphoenolpyruvate. UDP-N-acetyl-alpha-D-glucosamine is bound at residue Arg-92. Residue Cys-116 is the Proton donor of the active site. Cys-116 carries the 2-(S-cysteinyl)pyruvic acid O-phosphothioketal modification. UDP-N-acetyl-alpha-D-glucosamine-binding positions include 121–125 (RPIDQ), Asp-304, and Ile-326.

This sequence belongs to the EPSP synthase family. MurA subfamily.

It localises to the cytoplasm. It catalyses the reaction phosphoenolpyruvate + UDP-N-acetyl-alpha-D-glucosamine = UDP-N-acetyl-3-O-(1-carboxyvinyl)-alpha-D-glucosamine + phosphate. The protein operates within cell wall biogenesis; peptidoglycan biosynthesis. Its function is as follows. Cell wall formation. Adds enolpyruvyl to UDP-N-acetylglucosamine. The polypeptide is UDP-N-acetylglucosamine 1-carboxyvinyltransferase 2 (Geobacillus kaustophilus (strain HTA426)).